Reading from the N-terminus, the 81-residue chain is MGVHFNICLLLLLVATISSQTLKATEKDDSTDENPFGIYRRGSQCAVYGGRCIPTSVRCPPNTFQCDLSGCSWSERCCCHL.

An N-terminal signal peptide occupies residues 1-19 (MGVHFNICLLLLLVATISS). Residues 20 to 39 (QTLKATEKDDSTDENPFGIY) constitute a propeptide that is removed on maturation.

The protein belongs to the Cnidaria small cysteine-rich protein (SCRiP) family. alpha subfamily. The basic myotoxic domain of rattlesnake crotamine toxins (with 6 Cys residues) has been detected in this protein. However, this protein contains 2 additional Cys at the C-terminal region. Hence, this protein may contain 4 disulfide bonds instead of the 3 suggested by the myotoxin domain.

It localises to the secreted. Its subcellular location is the nematocyst. Functionally, induces neurotoxic symptoms on zebrafish. Has also been claimed to be implied in calcification, but tests on homolog proteins suggest that proteins of this family have a neurotoxic function and not a calcification function. In Montipora capitata (Rice coral), this protein is Small cysteine-rich protein 1 1.